Reading from the N-terminus, the 728-residue chain is LPS-assembly protein LptD (728 aa).

The first 21 residues, 1–21 (MSALPGFTLAALLLNVSLAEA), serve as a signal peptide directing secretion.

The protein belongs to the LptD family. As to quaternary structure, component of the lipopolysaccharide transport and assembly complex. Interacts with LptE and LptA.

The protein localises to the cell outer membrane. Functionally, together with LptE, is involved in the assembly of lipopolysaccharide (LPS) at the surface of the outer membrane. This chain is LPS-assembly protein LptD, found in Thiobacillus denitrificans (strain ATCC 25259 / T1).